We begin with the raw amino-acid sequence, 330 residues long: Electron transfer flavoprotein subunit alpha (330 aa).

An FAD-binding site is contributed by 270–298 (LYIACGISGAIQHLAGMSNSGTIVAINKN).

Belongs to the ETF alpha-subunit/FixB family. As to quaternary structure, heterodimer of an alpha and a beta subunit. Requires FAD as cofactor.

The electron transfer flavoprotein serves as a specific electron acceptor for other dehydrogenases. It transfers the electrons to the main respiratory chain via ETF-ubiquinone oxidoreductase (ETF dehydrogenase). This is Electron transfer flavoprotein subunit alpha (etfA) from Thermoanaerobacterium thermosaccharolyticum (strain ATCC 7956 / DSM 571 / NCIMB 9385 / NCA 3814 / NCTC 13789 / WDCM 00135 / 2032) (Clostridium thermosaccharolyticum).